A 1143-amino-acid polypeptide reads, in one-letter code: DNA-directed RNA polymerase subunit beta (1143 aa).

The protein belongs to the RNA polymerase beta chain family. In terms of assembly, in plastids the minimal PEP RNA polymerase catalytic core is composed of four subunits: alpha, beta, beta', and beta''. When a (nuclear-encoded) sigma factor is associated with the core the holoenzyme is formed, which can initiate transcription.

It localises to the plastid. It is found in the chloroplast. It carries out the reaction RNA(n) + a ribonucleoside 5'-triphosphate = RNA(n+1) + diphosphate. Functionally, DNA-dependent RNA polymerase catalyzes the transcription of DNA into RNA using the four ribonucleoside triphosphates as substrates. The sequence is that of DNA-directed RNA polymerase subunit beta from Porphyra purpurea (Red seaweed).